The primary structure comprises 123 residues: Fluoride-specific ion channel FluC (123 aa).

4 consecutive transmembrane segments (helical) span residues 1-21 (MLEILLVFLGGGLGSIARYLM), 32-52 (ILSLGTFTVNIIGSFIIGLVI), 64-84 (IGLLLATGFCGGFTTFSSFSY), and 99-119 (FGYTIMSLFWGFAATFLGIYL). Na(+) is bound by residues glycine 74 and threonine 77.

This sequence belongs to the fluoride channel Fluc/FEX (TC 1.A.43) family.

Its subcellular location is the cell inner membrane. The enzyme catalyses fluoride(in) = fluoride(out). With respect to regulation, na(+) is not transported, but it plays an essential structural role and its presence is essential for fluoride channel function. Functionally, fluoride-specific ion channel. Important for reducing fluoride concentration in the cell, thus reducing its toxicity. In Gloeothece citriformis (strain PCC 7424) (Cyanothece sp. (strain PCC 7424)), this protein is Fluoride-specific ion channel FluC.